Reading from the N-terminus, the 310-residue chain is Glycerol-3-phosphate dehydrogenase [NAD(P)+] (310 aa).

W14, R34, R35, and K82 together coordinate NADPH. Positions 82 and 110 each coordinate sn-glycerol 3-phosphate. Position 114 (S114) interacts with NADPH. Sn-glycerol 3-phosphate-binding residues include K165, D218, S228, R229, and N230. K165 acts as the Proton acceptor in catalysis. R229 lines the NADPH pocket. E255 contributes to the NADPH binding site.

This sequence belongs to the NAD-dependent glycerol-3-phosphate dehydrogenase family.

The protein localises to the cytoplasm. The catalysed reaction is sn-glycerol 3-phosphate + NAD(+) = dihydroxyacetone phosphate + NADH + H(+). The enzyme catalyses sn-glycerol 3-phosphate + NADP(+) = dihydroxyacetone phosphate + NADPH + H(+). It functions in the pathway membrane lipid metabolism; glycerophospholipid metabolism. Its function is as follows. Catalyzes the reduction of the glycolytic intermediate dihydroxyacetone phosphate (DHAP) to sn-glycerol 3-phosphate (G3P), the key precursor for phospholipid synthesis. The sequence is that of Glycerol-3-phosphate dehydrogenase [NAD(P)+] from Acaryochloris marina (strain MBIC 11017).